Reading from the N-terminus, the 399-residue chain is Acetate kinase (399 aa).

N7 serves as a coordination point for Mg(2+). Residue K14 participates in ATP binding. Residue R91 participates in substrate binding. D148 (proton donor/acceptor) is an active-site residue. ATP contacts are provided by residues 208–212 (HLGNG), 283–285 (DFR), and 331–335 (GLGEN). E384 is a Mg(2+) binding site.

The protein belongs to the acetokinase family. Homodimer. The cofactor is Mg(2+). Mn(2+) serves as cofactor.

It localises to the cytoplasm. The enzyme catalyses acetate + ATP = acetyl phosphate + ADP. The protein operates within metabolic intermediate biosynthesis; acetyl-CoA biosynthesis; acetyl-CoA from acetate: step 1/2. In terms of biological role, catalyzes the formation of acetyl phosphate from acetate and ATP. Can also catalyze the reverse reaction. This is Acetate kinase from Desulfitobacterium hafniense (strain Y51).